A 536-amino-acid polypeptide reads, in one-letter code: Suppressor of cytokine signaling 5 (536 aa).

Residues 1 to 50 form a required for interaction with IL4R region; sequence MDKVGKMWNNFKYRCQNLFGHEGGSRSENVDMNSNRCLSVKEKNISIGDS. The disordered stretch occupies residues 115 to 175; the sequence is SRHAPWGGKK…SVSSRTVGSR (61 aa). A compositionally biased stretch (low complexity) spans 158 to 169; it reads VSSVHDMDSVSS. Positions 381–476 constitute an SH2 domain; that stretch reads CYWGVMDRYE…FFEPLLTISL (96 aa). The region spanning 471–520 is the SOCS box domain; the sequence is LLTISLNRTFPFSLQYICRAVICRCTTYDGIDGLPLPSMLQDFLKEYHYK.

As to quaternary structure, interacts with IL4R; inhibits IL4 signaling. Interacts with EGFR. Interacts with ELOB and ELOC; mediates EGFR ubiquitination and degradation. In terms of processing, phosphorylated. Phosphorylation is induced by EGF.

The protein operates within protein modification; protein ubiquitination. SOCS family proteins form part of a classical negative feedback system that regulates cytokine signal transduction. May be a substrate-recognition component of a SCF-like ECS (Elongin BC-CUL2/5-SOCS-box protein) E3 ubiquitin-protein ligase complex which mediates the ubiquitination and subsequent proteasomal degradation of target proteins. Inhibits for instance EGF signaling by mediating the degradation of the EGF receptor/EGFR. Involved in the regulation of T-helper cell differentiation by inhibiting of the IL4 signaling pathway which promotes differentiation into the Th2 phenotype. Can also partially inhibit IL6 and LIF signaling. The polypeptide is Suppressor of cytokine signaling 5 (SOCS5) (Homo sapiens (Human)).